A 147-amino-acid chain; its full sequence is Protein SprT-like (147 aa).

The 134-residue stretch at 9 to 142 (AKVKEISLTY…CGKCRGKLIL (134 aa)) folds into the SprT-like domain. A Zn(2+)-binding site is contributed by H65. E66 is a catalytic residue. A Zn(2+)-binding site is contributed by H69.

It belongs to the SprT family. Zn(2+) serves as cofactor.

It localises to the cytoplasm. The protein is Protein SprT-like (yciD) of Lactococcus lactis subsp. lactis (strain IL1403) (Streptococcus lactis).